Consider the following 344-residue polypeptide: Pre-mRNA-splicing factor cwc-21 (344 aa).

Residues 1–19 (MSDNVGLSTPRGSGTSGYV) show a composition bias toward polar residues. 2 disordered regions span residues 1 to 58 (MSDN…LEHD) and 98 to 344 (EMER…DNRD). Basic and acidic residues predominate over residues 38 to 58 (KDFDSLKHQPRQPDKGLLEHD). The 44-residue stretch at 55-98 (LEHDRKREVEVKVFELRDKLEEEGVEEDEIETRCDELRRKLLAE) folds into the CWF21 domain. The stretch at 69 to 105 (ELRDKLEEEGVEEDEIETRCDELRRKLLAEMERNQNS) forms a coiled coil. Basic and acidic residues-rich tracts occupy residues 120–167 (QVHE…REAN), 188–226 (RGGDRDRGRGRGFGRRDRDEGRLNSRERRAPPRDWDRPP), and 238–277 (GGRDREVDSYRGAAGRDRSRSRSPIRERSRTRSPVRDTGR). Over residues 288–306 (SRSRSRSRSYSRSRSPPRR) the composition is skewed to basic residues. Basic and acidic residues-rich tracts occupy residues 307–316 (RAADSQDRSL) and 327–344 (SPDRDRYREKYRDRDNRD).

It belongs to the CWC21 family. In terms of assembly, associates with the NTC complex (or PRP19-associated complex). The NTC complex associates with the spliceosome after the release of the U1 and U4 snRNAs and forms the CWC spliceosome subcomplex reminiscent of a late-stage spliceosome.

The protein resides in the cytoplasm. It is found in the nucleus. Its function is as follows. Involved in pre-mRNA splicing. May function at or prior to the first catalytic step of splicing at the catalytic center of the spliceosome. May do so by stabilizing the catalytic center or the position of the RNA substrate. The polypeptide is Pre-mRNA-splicing factor cwc-21 (cwc-21) (Neurospora crassa (strain ATCC 24698 / 74-OR23-1A / CBS 708.71 / DSM 1257 / FGSC 987)).